The chain runs to 546 residues: Probable protein kinase UbiB (546 aa).

The region spanning 124 to 502 (DFDIKPLASA…QARQGQSRYL (379 aa)) is the Protein kinase domain. Residues 130-138 (LASASIAQV) and K153 contribute to the ATP site. D288 (proton acceptor) is an active-site residue. 2 helical membrane passes run 499–519 (SRYL…LLIS) and 521–541 (VEAD…WIIG).

Belongs to the ABC1 family. UbiB subfamily.

It localises to the cell inner membrane. It functions in the pathway cofactor biosynthesis; ubiquinone biosynthesis [regulation]. Its function is as follows. Is probably a protein kinase regulator of UbiI activity which is involved in aerobic coenzyme Q (ubiquinone) biosynthesis. The protein is Probable protein kinase UbiB of Pectobacterium carotovorum subsp. carotovorum (strain PC1).